A 78-amino-acid polypeptide reads, in one-letter code: Acyl carrier protein (78 aa).

A Carrier domain is found at 2–77; the sequence is SDIASRVKAI…QAISYIEEAK (76 aa). O-(pantetheine 4'-phosphoryl)serine is present on Ser37.

Belongs to the acyl carrier protein (ACP) family. 4'-phosphopantetheine is transferred from CoA to a specific serine of apo-ACP by AcpS. This modification is essential for activity because fatty acids are bound in thioester linkage to the sulfhydryl of the prosthetic group.

Its subcellular location is the cytoplasm. It participates in lipid metabolism; fatty acid biosynthesis. Functionally, carrier of the growing fatty acid chain in fatty acid biosynthesis. This Flavobacterium johnsoniae (strain ATCC 17061 / DSM 2064 / JCM 8514 / BCRC 14874 / CCUG 350202 / NBRC 14942 / NCIMB 11054 / UW101) (Cytophaga johnsonae) protein is Acyl carrier protein.